We begin with the raw amino-acid sequence, 372 residues long: Flagellar P-ring protein (372 aa).

The first 26 residues, 1–26 (MNLSSLPHRLLAAAVALCAIAAPASA), serve as a signal peptide directing secretion.

The protein belongs to the FlgI family. The basal body constitutes a major portion of the flagellar organelle and consists of four rings (L,P,S, and M) mounted on a central rod.

It localises to the periplasm. Its subcellular location is the bacterial flagellum basal body. Functionally, assembles around the rod to form the L-ring and probably protects the motor/basal body from shearing forces during rotation. This is Flagellar P-ring protein from Xanthomonas campestris pv. campestris (strain ATCC 33913 / DSM 3586 / NCPPB 528 / LMG 568 / P 25).